Here is a 197-residue protein sequence, read N- to C-terminus: RNA polymerase II subunit A C-terminal domain phosphatase ssup-72 (197 aa).

At Ser39 the chain carries Phosphoserine.

Belongs to the SSU72 phosphatase family. As to quaternary structure, may interact with synd-1 (via C-terminus); the interaction may prevent ssup-72 binding to RNA polymerase II ama-1. May interact with RNA polymerase II ama-1. May be phosphorylated by kin-20. Expressed in epidermis, intestine and nervous system.

The protein resides in the nucleus. It catalyses the reaction O-phospho-L-seryl-[protein] + H2O = L-seryl-[protein] + phosphate. The enzyme catalyses O-phospho-L-threonyl-[protein] + H2O = L-threonyl-[protein] + phosphate. Protein phosphatase that dephosphorylates 'Ser-5' of the heptad repeats YSPTSPS in the C-terminal domain of the large RNA polymerase II subunit ama-1. By regulating the phosphorylation status of ama-1 and thus ama-1 binding to specific polyadenylation sites, regulates alternative polyadenylation of pre-mRNAs, including unc-44 and dlk-1 mRNAs. This results in the tissue-specific expression of unc-44 isoforms. This is RNA polymerase II subunit A C-terminal domain phosphatase ssup-72 from Caenorhabditis elegans.